A 689-amino-acid chain; its full sequence is DNA ligase (689 aa).

Residues 40–44 (DAEYD), 89–90 (SL), and E121 contribute to the NAD(+) site. K123 (N6-AMP-lysine intermediate) is an active-site residue. Positions 144, 179, 295, and 319 each coordinate NAD(+). Zn(2+) contacts are provided by C413, C416, C431, and C437. One can recognise a BRCT domain in the interval 610-689 (KEHSSLTGKI…EEWLTIVNNV (80 aa)).

It belongs to the NAD-dependent DNA ligase family. LigA subfamily. It depends on Mg(2+) as a cofactor. Requires Mn(2+) as cofactor.

It catalyses the reaction NAD(+) + (deoxyribonucleotide)n-3'-hydroxyl + 5'-phospho-(deoxyribonucleotide)m = (deoxyribonucleotide)n+m + AMP + beta-nicotinamide D-nucleotide.. In terms of biological role, DNA ligase that catalyzes the formation of phosphodiester linkages between 5'-phosphoryl and 3'-hydroxyl groups in double-stranded DNA using NAD as a coenzyme and as the energy source for the reaction. It is essential for DNA replication and repair of damaged DNA. This chain is DNA ligase, found in Rickettsia canadensis (strain McKiel).